A 281-amino-acid polypeptide reads, in one-letter code: ATP phosphoribosyltransferase (281 aa).

It belongs to the ATP phosphoribosyltransferase family. Long subfamily. Mg(2+) is required as a cofactor.

It is found in the cytoplasm. The catalysed reaction is 1-(5-phospho-beta-D-ribosyl)-ATP + diphosphate = 5-phospho-alpha-D-ribose 1-diphosphate + ATP. Its pathway is amino-acid biosynthesis; L-histidine biosynthesis; L-histidine from 5-phospho-alpha-D-ribose 1-diphosphate: step 1/9. With respect to regulation, feedback inhibited by histidine. Functionally, catalyzes the condensation of ATP and 5-phosphoribose 1-diphosphate to form N'-(5'-phosphoribosyl)-ATP (PR-ATP). Has a crucial role in the pathway because the rate of histidine biosynthesis seems to be controlled primarily by regulation of HisG enzymatic activity. This is ATP phosphoribosyltransferase from Corynebacterium aurimucosum (strain ATCC 700975 / DSM 44827 / CIP 107346 / CN-1) (Corynebacterium nigricans).